The chain runs to 363 residues: Aspartate-semialdehyde dehydrogenase (363 aa).

The NADP(+) site is built by T15, G16, S17, V18, S40, S43, and L87. The active-site Acyl-thioester intermediate is the C154. Position 186 (G186) interacts with NADP(+). The Proton acceptor role is filled by H251. N341 is an NADP(+) binding site.

The protein belongs to the aspartate-semialdehyde dehydrogenase family. Homotetramer; dimer of dimers.

It is found in the cytoplasm. It localises to the cytosol. Its subcellular location is the nucleus. The enzyme catalyses L-aspartate 4-semialdehyde + phosphate + NADP(+) = 4-phospho-L-aspartate + NADPH + H(+). Its pathway is amino-acid biosynthesis; L-methionine biosynthesis via de novo pathway; L-homoserine from L-aspartate: step 2/3. It participates in amino-acid biosynthesis; L-threonine biosynthesis; L-threonine from L-aspartate: step 2/5. Inhibited by 4-amino-3-hydroxynaphthalene-1-sulfonic acid and the competitive inhibitor 1,4-benzoquinone and derivates such as 2-chloro-3-methoxy-1,4-naphthoquinone, 2,3-dichloro-1,4-naphthoquinone, 2-chloro-1,4-naphthoquinone, 2-bromo-1,4-naphthoquinone and 2,3-dichloro-5,8-dihydroxy-1,4-naphthoquinone. Its function is as follows. Catalyzes the NADPH-dependent formation of L-aspartate 4-semialdehyde (L-ASA) by the reductive dephosphorylation of 4-phospho-L-aspartate. Mediates the second step in the biosynthesis of amino acids that derive from aspartate (the aspartate family of amino acids), including methioinine and threonine, the latter of which is a precursor to isoleucine. In Aspergillus fumigatus (strain ATCC MYA-4609 / CBS 101355 / FGSC A1100 / Af293) (Neosartorya fumigata), this protein is Aspartate-semialdehyde dehydrogenase.